Consider the following 382-residue polypeptide: Dual-specificity RNA methyltransferase RlmN (382 aa).

Glu94 serves as the catalytic Proton acceptor. The region spanning 100-336 (EANRGTLCVS…NTITRKTRGD (237 aa)) is the Radical SAM core domain. An intrachain disulfide couples Cys107 to Cys342. Positions 114, 118, and 121 each coordinate [4Fe-4S] cluster. S-adenosyl-L-methionine contacts are provided by residues 168-169 (GE), Ser200, 222-224 (SLH), and Asn299. Cys342 functions as the S-methylcysteine intermediate in the catalytic mechanism.

It belongs to the radical SAM superfamily. RlmN family. It depends on [4Fe-4S] cluster as a cofactor.

The protein resides in the cytoplasm. The enzyme catalyses adenosine(2503) in 23S rRNA + 2 reduced [2Fe-2S]-[ferredoxin] + 2 S-adenosyl-L-methionine = 2-methyladenosine(2503) in 23S rRNA + 5'-deoxyadenosine + L-methionine + 2 oxidized [2Fe-2S]-[ferredoxin] + S-adenosyl-L-homocysteine. The catalysed reaction is adenosine(37) in tRNA + 2 reduced [2Fe-2S]-[ferredoxin] + 2 S-adenosyl-L-methionine = 2-methyladenosine(37) in tRNA + 5'-deoxyadenosine + L-methionine + 2 oxidized [2Fe-2S]-[ferredoxin] + S-adenosyl-L-homocysteine. Specifically methylates position 2 of adenine 2503 in 23S rRNA and position 2 of adenine 37 in tRNAs. m2A2503 modification seems to play a crucial role in the proofreading step occurring at the peptidyl transferase center and thus would serve to optimize ribosomal fidelity. The sequence is that of Dual-specificity RNA methyltransferase RlmN from Legionella pneumophila subsp. pneumophila (strain Philadelphia 1 / ATCC 33152 / DSM 7513).